A 116-amino-acid polypeptide reads, in one-letter code: Cyclin-dependent protein kinase inhibitor SMR9 (116 aa).

Basic residues predominate over residues 1-22 (MASKGKKPLRRTTTRRRKRSHF). Positions 1-62 (MASKGKKPLR…PVSAESGCCT (62 aa)) are disordered. Over residues 35–56 (VTSTSSTSTSPTSTATPSPVSA) the composition is skewed to low complexity.

Functionally, probable cyclin-dependent protein kinase (CDK) inhibitor that functions as a repressor of mitosis in the endoreduplication cell cycle. The polypeptide is Cyclin-dependent protein kinase inhibitor SMR9 (Arabidopsis thaliana (Mouse-ear cress)).